A 328-amino-acid polypeptide reads, in one-letter code: GTPase Obg 2 (328 aa).

An Obg domain is found at 1–139; the sequence is MSFRREKFIE…HCVLLKLKIV (139 aa). In terms of domain architecture, OBG-type G spans 140-309; the sequence is SDVGIIGMPN…LHAQVKKAVV (170 aa). GTP is bound by residues 146–153, 171–175, 192–195, 259–262, and 290–292; these read GMPNAGKS, FTTLE, DIPG, NKCD, and GDE. Mg(2+) contacts are provided by Ser153 and Thr173.

This sequence belongs to the TRAFAC class OBG-HflX-like GTPase superfamily. OBG GTPase family. As to quaternary structure, monomer. Mg(2+) serves as cofactor.

Its subcellular location is the cytoplasm. Functionally, an essential GTPase which binds GTP, GDP and possibly (p)ppGpp with moderate affinity, with high nucleotide exchange rates and a fairly low GTP hydrolysis rate. Plays a role in control of the cell cycle, stress response, ribosome biogenesis and in those bacteria that undergo differentiation, in morphogenesis control. In Anaplasma marginale (strain St. Maries), this protein is GTPase Obg 2.